A 231-amino-acid chain; its full sequence is Putative N-acetylmannosamine-6-phosphate 2-epimerase (231 aa).

It belongs to the NanE family.

The enzyme catalyses an N-acyl-D-glucosamine 6-phosphate = an N-acyl-D-mannosamine 6-phosphate. It functions in the pathway amino-sugar metabolism; N-acetylneuraminate degradation; D-fructose 6-phosphate from N-acetylneuraminate: step 3/5. Functionally, converts N-acetylmannosamine-6-phosphate (ManNAc-6-P) to N-acetylglucosamine-6-phosphate (GlcNAc-6-P). The chain is Putative N-acetylmannosamine-6-phosphate 2-epimerase from Listeria monocytogenes serotype 4b (strain CLIP80459).